The sequence spans 416 residues: Inositol polyphosphate multikinase (416 aa).

Residues methionine 1–glycine 38 form a disordered region. Residue alanine 2 is modified to N-acetylalanine. The residue at position 7 (serine 7) is a Phosphoserine. Lysine 75 contributes to the ATP binding site. Arginine 82 serves as a coordination point for substrate. ATP is bound by residues glutamate 131 to valine 133 and aspartate 144. Substrate is bound by residues lysine 146, lysine 160–lysine 167, and glutamine 196. Residues arginine 320–histidine 330 carry the Nuclear localization signal motif. Aspartate 385 contributes to the ATP binding site. Residue histidine 388 coordinates substrate.

Belongs to the inositol phosphokinase (IPK) family. The cofactor is Mg(2+). Ubiquitous, with the highest expression in skeletal muscle, liver, placenta, lung, peripheral blood leukocytes, kidney, spleen and colon.

The protein localises to the nucleus. It catalyses the reaction 1D-myo-inositol 1,4,5-trisphosphate + 2 ATP = 1D-myo-inositol 1,3,4,5,6-pentakisphosphate + 2 ADP + 2 H(+). The enzyme catalyses 1D-myo-inositol 1,3,4,6-tetrakisphosphate + ATP = 1D-myo-inositol 1,3,4,5,6-pentakisphosphate + ADP + H(+). It carries out the reaction 1-octadecanoyl-2-(5Z,8Z,11Z,14Z)-eicosatetraenoyl-sn-glycero-3-phospho-1D-myo-inositol 4,5-bisphosphate + ATP = 1-octadecanoyl-2-(5Z,8Z,11Z,14Z-eicosatetraenoyl)-sn-glycero-3-phospho-(1D-myo-inositol 3,4,5-triphosphate) + ADP + H(+). The catalysed reaction is a 1,2-diacyl-sn-glycero-3-phospho-(1D-myo-inositol-4,5-bisphosphate) + ATP = a 1,2-diacyl-sn-glycero-3-phospho-(1D-myo-inositol-3,4,5-trisphosphate) + ADP + H(+). It catalyses the reaction 1D-myo-inositol 1,4,5,6-tetrakisphosphate + ATP = 1D-myo-inositol 1,3,4,5,6-pentakisphosphate + ADP + H(+). Its pathway is phospholipid metabolism; phosphatidylinositol metabolism. Inhibited by flavonoids that occupy the ATP-binding pocket. Inhibited by myricetin, quercetin, luteolin, kaempferol, isorhamnetin and diosmetin, and to a lesser degree by rhamnetin and apigenin. In terms of biological role, inositol phosphate kinase with a broad substrate specificity. Phosphorylates inositol 1,4,5-trisphosphate (Ins(1,4,5)P3) first to inositol 1,3,4,5-tetrakisphosphate and then to inositol 1,3,4,5,6-pentakisphosphate (Ins(1,3,4,5,6)P5). Phosphorylates inositol 1,3,4,6-tetrakisphosphate (Ins(1,3,4,6)P4). Phosphorylates inositol 1,4,5,6-tetrakisphosphate (Ins(1,4,5,6)P4). Phosphorylates glycero-3-phospho-1D-myo-inositol 4,5-bisphosphate to glycero-3-phospho-1D-myo-inositol 3,4,5-trisphosphate. Plays an important role in MLKL-mediated necroptosis via its role in the biosynthesis of inositol pentakisphosphate (InsP5) and inositol hexakisphosphate (InsP6). Binding of these highly phosphorylated inositol phosphates to MLKL mediates the release of an N-terminal auto-inhibitory region, leading to activation of the kinase. Essential for activated phospho-MLKL to oligomerize and localize to the cell membrane during necroptosis. Required for normal embryonic development, probably via its role in the biosynthesis of inositol 1,3,4,5,6-pentakisphosphate (Ins(1,3,4,5,6)P5) and inositol hexakisphosphate (InsP6). The chain is Inositol polyphosphate multikinase (IPMK) from Homo sapiens (Human).